The primary structure comprises 287 residues: Polyamine aminopropyltransferase (287 aa).

Positions 9 to 242 (GSWLDEYQND…GIWSWTFASI (234 aa)) constitute a PABS domain. Glutamine 36 lines the S-methyl-5'-thioadenosine pocket. Residues histidine 67 and aspartate 91 each coordinate spermidine. Residues glutamate 111 and 143–144 (NG) contribute to the S-methyl-5'-thioadenosine site. The active-site Proton acceptor is aspartate 162. Position 169 (proline 169) interacts with S-methyl-5'-thioadenosine.

It belongs to the spermidine/spermine synthase family. Homodimer or homotetramer.

It is found in the cytoplasm. The catalysed reaction is S-adenosyl 3-(methylsulfanyl)propylamine + putrescine = S-methyl-5'-thioadenosine + spermidine + H(+). The protein operates within amine and polyamine biosynthesis; spermidine biosynthesis; spermidine from putrescine: step 1/1. Functionally, catalyzes the irreversible transfer of a propylamine group from the amino donor S-adenosylmethioninamine (decarboxy-AdoMet) to putrescine (1,4-diaminobutane) to yield spermidine. In Prochlorococcus marinus (strain SARG / CCMP1375 / SS120), this protein is Polyamine aminopropyltransferase.